Reading from the N-terminus, the 510-residue chain is Probable cytosol aminopeptidase (510 aa).

The Mn(2+) site is built by Lys-282 and Asp-287. Lys-294 is a catalytic residue. Mn(2+) contacts are provided by Asp-305, Asp-364, and Glu-366. Arg-368 is an active-site residue.

Belongs to the peptidase M17 family. It depends on Mn(2+) as a cofactor.

The protein resides in the cytoplasm. It carries out the reaction Release of an N-terminal amino acid, Xaa-|-Yaa-, in which Xaa is preferably Leu, but may be other amino acids including Pro although not Arg or Lys, and Yaa may be Pro. Amino acid amides and methyl esters are also readily hydrolyzed, but rates on arylamides are exceedingly low.. The enzyme catalyses Release of an N-terminal amino acid, preferentially leucine, but not glutamic or aspartic acids.. In terms of biological role, presumably involved in the processing and regular turnover of intracellular proteins. Catalyzes the removal of unsubstituted N-terminal amino acids from various peptides. This is Probable cytosol aminopeptidase from Cupriavidus metallidurans (strain ATCC 43123 / DSM 2839 / NBRC 102507 / CH34) (Ralstonia metallidurans).